A 55-amino-acid polypeptide reads, in one-letter code: MAARNEIRPIVKLKSTAGTGYTYVTRKNRRNDPDRLVMKKYDPVGRKHVDFREEK.

The protein belongs to the bacterial ribosomal protein bL33 family.

The protein is Large ribosomal subunit protein bL33B of Rhodococcus jostii (strain RHA1).